The primary structure comprises 2105 residues: MSYFLPSFFQKRLLRYALSRLELVDTDALDLESLGITWGQRSTFELRDIGLRLEKLSSVLQLPPSCKLTQATVSLIHVTIPADIYSSSIVVEVENVQVKLKLLSDDAASSGDDRELCRPFDELSNNPKANDPHPPGSHSHDRSSEKSSILPSTTDLAQSFLESEPKEEKAELEAAISSQSQYSQCSDGLSDDGEEELGIGVEDGMSLPGFVAGFFQGVADRLQLKVKDVVFKIDMEVGHDRTSNSPQDLTVDTVTAMFTIQNISIDSVVSPMEENPELKPGKRFISFSQINLIFLADAGVFSNYSHFVPPSLKSPSVTHSTRSIHSKLSHSPLNVSSPAPTSSSSGSSLVMSRGTILDQPSLLEDRPSNHQLADSVYTDDGRFSDAGTEYEYGAGSYLDHTRPMTENHYDENILDNPIYLDEAIRSNLADEFQSSPPSISDPTDPTDEPSGDTPRPRSPTSLPDDHMYHSMESSTHSTNHPSQHLEIPPVEYQPEFSEPSGDEIEVSDSDNVPCTQEPSRSGSSTPQRSHSESASVVEDLSKSKIFTHEEATSIYMSVLSSISAGSLPDMPGGWESPKYEASKRNVSSPSLAPSTDVEPTSTTSEGTPKAKPLVQLENGETRDTSHVLGSPLLSNPNQSGLTEAEIKSPSRSPDYIPRIAKRVFEIDKLAVWLPSLDPKITKSQDVPTQNSPRNEFDHMETSTMSFTDSATDEEPVSLSQHLAFQQPRRELIFSQSLHQLASPEQDDTSVPGFYAGTILVDVPTITIEVDIACGWLLTMMGQRLVSTWNPTTQNEKCRSESKHATILPLNLTLANCSIRFLEHLPIYRSAFNATSLHYNPEVSEIILRVTLSGINFKSSVRGDTSEFILNVTKLTFGHASEDIISFDDGLKMRDSIRDDFHLKRGDISLSVLSTKGNTTVDLATLPVHFSFNLQRLDETLNWFGGLSTILELGNSISSTSTIKGGKVAANQRPRGVHFEVDSSKARPLPVGSSGVNPIPWKINARMKGFVMTLQGDRCSLKLKTTAVKIFMFAPMEEDLDRLLLLLTPSKDRYGEDDDIMLDTLFRQRKQGAVLRLTVGNLKADFPEPEMLRPLSSLGNELAKLSTVTKYLPQDDRPGILTLVLVQECSCGVALGGRIGDIEISLTGVEAAHVGIPSLMAARVSTLVVSRNDDEELVGEAANSQDETNIVALPMIMARFIADEMDPTVKIKLSNVRFEYTVPSIVAFLGLDNDMSAEDFAANIANSVVNLAELKSQETTIHRLAESSMSSVSSRPSPVPSKLSITLRDCLVGLNPRKSPARGIAVFTSAKFSGSLDKDVTLDACLEIQKATVMIINDSRNVGTRGSSHTRTSSDSQSNQVQLLHGMGYVPVCYLSSAAVVVKVMQLDDNGEKSVDVEVRDDLLILETCADSTQTLITILNELAPPSPPNKSLKYRTEVMPIDDMLSSFTGNAFETSPIREVGNLSNSYPVDEKEGDLAEELEYVSDFYPVTLESGKHDPGRNMHISGTSDADDGLSGLAHGPKTLLESFYSEAHVSSSVSSLDFQEDHFARKSAVGGTAHRWDSTYNTYALTNDAKLHGSPLRVRVRDVHFIWNLFDGFDWQHTRDAISKAVKDVEAKASEKFSRVGGRSSPQMGSEEDVIGDFLFNSIYIGIPSNRNPQQLREDINAHIDDLASETGSFATTTTMTDGSAATIKAPSKRSKKLRLNRSKRQKMTFELKGISADLVVFPPGSGETQSSLDIRVNDLEIFDHVPSSNWRKFATYMYDAGEKENGTAELAASEIILKATILPLRLHVDQDALDFMTRFFEFKDDSAPADTSPTEQPFLQRVEVNAVRVRLDFKPKRVDYGSLRSGRTTEFMNFFVLEEADMVLRHVIIYGVSGFEKLGVTLNDIWMPDIKANQLPGVLAGLAPIKSLVGVGSGFKDLVVIPMREYKKDGRIVRSIQKGALAFAKTTTNELVKLGAKLAIGTQTVLQGTEDFLNAPGDVGSQRYVATTDDDSADEEQQKQFSPYADQPVGVVQGLRGAYASLERDLLIARNAIVAVPGEVIESGSAQGAARALLKRAPTVILRPAIGASKALGQTLLGAGNSLDPTNRRRVEDKYKRH.

5 disordered regions span residues 108–199, 312–384, 432–538, 573–650, and 2086–2105; these read ASSG…ELGI, LKSP…GRFS, FQSS…SVVE, GWES…KSPS, and AGNS…YKRH. 2 stretches are compositionally biased toward basic and acidic residues: residues 111 to 121 and 163 to 172; these read GDDRELCRPFD and SEPKEEKAEL. Low complexity-rich tracts occupy residues 336–352 and 434–443; these read SSPA…LVMS and SSPPSISDPT. Polar residues-rich tracts occupy residues 471–482, 509–534, 584–606, and 632–641; these read MESSTHSTNHPS, SDNV…SESA, RNVS…TSEG, and LLSNPNQSGL. Residues 2093 to 2105 are compositionally biased toward basic and acidic residues; it reads TNRRRVEDKYKRH.

It belongs to the ATG2 family.

Its subcellular location is the preautophagosomal structure membrane. It is found in the endoplasmic reticulum membrane. It carries out the reaction a 1,2-diacyl-sn-glycero-3-phosphocholine(in) = a 1,2-diacyl-sn-glycero-3-phosphocholine(out). The catalysed reaction is a 1,2-diacyl-sn-glycero-3-phospho-L-serine(in) = a 1,2-diacyl-sn-glycero-3-phospho-L-serine(out). It catalyses the reaction a 1,2-diacyl-sn-glycero-3-phosphoethanolamine(in) = a 1,2-diacyl-sn-glycero-3-phosphoethanolamine(out). Its function is as follows. Lipid transfer protein required for autophagosome completion and peroxisome degradation. Tethers the edge of the isolation membrane (IM) to the endoplasmic reticulum (ER) and mediates direct lipid transfer from ER to IM for IM expansion. ATG2 binds to the ER exit site (ERES), which is the membrane source for autophagosome formation, using basic residues in its N-terminal region (NR) and to the expanding edge of the IM through its C-terminal region. The latter binding is assisted by an ATG18-PtdIns3P interaction. ATG2 then extracts phospholipids from the membrane source using its NR and transfers them to ATG9 to the IM through its predicted beta-sheet-rich structure for membrane expansion. In Ajellomyces capsulatus (strain NAm1 / WU24) (Darling's disease fungus), this protein is Autophagy-related protein 2 (ATG2).